We begin with the raw amino-acid sequence, 208 residues long: GTP cyclohydrolase 1 (208 aa).

The Zn(2+) site is built by C89, H92, and C163.

The protein belongs to the GTP cyclohydrolase I family. In terms of assembly, homomer.

It catalyses the reaction GTP + H2O = 7,8-dihydroneopterin 3'-triphosphate + formate + H(+). The protein operates within cofactor biosynthesis; 7,8-dihydroneopterin triphosphate biosynthesis; 7,8-dihydroneopterin triphosphate from GTP: step 1/1. The polypeptide is GTP cyclohydrolase 1 (Saccharolobus islandicus (strain Y.N.15.51 / Yellowstone #2) (Sulfolobus islandicus)).